The chain runs to 261 residues: Cytochrome c oxidase subunit 3 (261 aa).

Residues 1 to 15 are Mitochondrial matrix-facing; sequence MTHQAHAYHMVDPSP. The helical transmembrane segment at 16-34 threads the bilayer; sequence WPLTGAVAALLMTSGLAVW. The Mitochondrial intermembrane segment spans residues 35-40; sequence FHFHST. A helical membrane pass occupies residues 41 to 66; sequence TLMALGTVLLLLTMYQWWRDIIREGT. The Mitochondrial matrix segment spans residues 67 to 72; the sequence is FQGHHT. The chain crosses the membrane as a helical span at residues 73–105; the sequence is PPVQKGLRYGMILFITSEVFFFLGFFWAFYHAS. Topologically, residues 106–128 are mitochondrial intermembrane; it reads LAPTPELGGCWPPTGITTLDPFE. Residues 129-152 traverse the membrane as a helical segment; it reads VPLLNTAVLLASGVTVTWAHHSIM. Residues 153–155 are Mitochondrial matrix-facing; sequence EGE. The helical transmembrane segment at 156 to 183 threads the bilayer; it reads RKQAIHSLTLTILLGFYFTFLQGLEYYD. Topologically, residues 184 to 190 are mitochondrial intermembrane; sequence APFTIAD. The chain crosses the membrane as a helical span at residues 191–223; sequence GVYGSTFFVATGFHGLHVIIGSTFLAVCLLRQI. The Mitochondrial matrix portion of the chain corresponds to 224–232; it reads RYHFTSEHH. The chain crosses the membrane as a helical span at residues 233-256; that stretch reads FGFEAAAWYWHFVDVVWLFLYISI. Over 257–261 the chain is Mitochondrial intermembrane; it reads YWWGS.

This sequence belongs to the cytochrome c oxidase subunit 3 family. In terms of assembly, component of the cytochrome c oxidase (complex IV, CIV), a multisubunit enzyme composed of 14 subunits. The complex is composed of a catalytic core of 3 subunits MT-CO1, MT-CO2 and MT-CO3, encoded in the mitochondrial DNA, and 11 supernumerary subunits COX4I, COX5A, COX5B, COX6A, COX6B, COX6C, COX7A, COX7B, COX7C, COX8 and NDUFA4, which are encoded in the nuclear genome. The complex exists as a monomer or a dimer and forms supercomplexes (SCs) in the inner mitochondrial membrane with NADH-ubiquinone oxidoreductase (complex I, CI) and ubiquinol-cytochrome c oxidoreductase (cytochrome b-c1 complex, complex III, CIII), resulting in different assemblies (supercomplex SCI(1)III(2)IV(1) and megacomplex MCI(2)III(2)IV(2)).

It is found in the mitochondrion inner membrane. It catalyses the reaction 4 Fe(II)-[cytochrome c] + O2 + 8 H(+)(in) = 4 Fe(III)-[cytochrome c] + 2 H2O + 4 H(+)(out). Functionally, component of the cytochrome c oxidase, the last enzyme in the mitochondrial electron transport chain which drives oxidative phosphorylation. The respiratory chain contains 3 multisubunit complexes succinate dehydrogenase (complex II, CII), ubiquinol-cytochrome c oxidoreductase (cytochrome b-c1 complex, complex III, CIII) and cytochrome c oxidase (complex IV, CIV), that cooperate to transfer electrons derived from NADH and succinate to molecular oxygen, creating an electrochemical gradient over the inner membrane that drives transmembrane transport and the ATP synthase. Cytochrome c oxidase is the component of the respiratory chain that catalyzes the reduction of oxygen to water. Electrons originating from reduced cytochrome c in the intermembrane space (IMS) are transferred via the dinuclear copper A center (CU(A)) of subunit 2 and heme A of subunit 1 to the active site in subunit 1, a binuclear center (BNC) formed by heme A3 and copper B (CU(B)). The BNC reduces molecular oxygen to 2 water molecules using 4 electrons from cytochrome c in the IMS and 4 protons from the mitochondrial matrix. The sequence is that of Cytochrome c oxidase subunit 3 (mt-co3) from Gadus morhua (Atlantic cod).